A 79-amino-acid polypeptide reads, in one-letter code: Exodeoxyribonuclease 7 small subunit (79 aa).

The protein belongs to the XseB family. Heterooligomer composed of large and small subunits.

The protein localises to the cytoplasm. It catalyses the reaction Exonucleolytic cleavage in either 5'- to 3'- or 3'- to 5'-direction to yield nucleoside 5'-phosphates.. Its function is as follows. Bidirectionally degrades single-stranded DNA into large acid-insoluble oligonucleotides, which are then degraded further into small acid-soluble oligonucleotides. This is Exodeoxyribonuclease 7 small subunit from Haemophilus influenzae (strain PittGG).